The following is a 179-amino-acid chain: uncharacterized protein (179 aa).

Residues 26–39 are compositionally biased toward low complexity; that stretch reads AAKLAAATTPTHTA. Residues 26-179 form a disordered region; it reads AAKLAAATTP…RPRRNTLRHM (154 aa). The segment covering 150–165 has biased composition (polar residues); that stretch reads RQSVTQSTAARQTQPH. A compositionally biased stretch (basic residues) spans 167 to 179; that stretch reads GRPRPRRNTLRHM.

This is an uncharacterized protein from Equus caballus (Horse).